The sequence spans 110 residues: Cytochrome c (110 aa).

4 residues coordinate heme c: Cys21, Cys24, His25, and Met87.

The protein belongs to the cytochrome c family. Post-translationally, binds 1 heme c group covalently per subunit.

Its subcellular location is the mitochondrion intermembrane space. Electron carrier protein. The oxidized form of the cytochrome c heme group can accept an electron from the heme group of the cytochrome c1 subunit of cytochrome reductase. Cytochrome c then transfers this electron to the cytochrome oxidase complex, the final protein carrier in the mitochondrial electron-transport chain. The chain is Cytochrome c (CYCK) from Kluyveromyces lactis (strain ATCC 8585 / CBS 2359 / DSM 70799 / NBRC 1267 / NRRL Y-1140 / WM37) (Yeast).